We begin with the raw amino-acid sequence, 4080 residues long: Hybrid PKS-NRPS synthetase poxE (4080 aa).

The Ketosynthase family 3 (KS3) domain maps to 8-442 (REPIAIVGSG…GTNAHAIIEA (435 aa)). Active-site for beta-ketoacyl synthase activity residues include cysteine 181, histidine 320, and histidine 362. Positions 554-878 (VFTGQGAQWA…QRGMNDVEAM (325 aa)) are malonyl-CoA:ACP transacylase (MAT) domain. The N-terminal hotdog fold stretch occupies residues 944–1078 (HPILGTRCPD…GRLVITYGPV (135 aa)). The region spanning 944–1246 (HPILGTRCPD…AVPLEATNAD (303 aa)) is the PKS/mFAS DH domain. The interval 945-1243 (PILGTRCPDG…GIHAVPLEAT (299 aa)) is dehydratase (DH) domain. Histidine 976 (proton acceptor; for dehydratase activity) is an active-site residue. Residues 1093–1246 (MVDVPSERFY…AVPLEATNAD (154 aa)) are C-terminal hotdog fold. Aspartate 1152 functions as the Proton donor; for dehydratase activity in the catalytic mechanism. Residues 1400–1585 (HFSDYLASVV…GVDTFTSDAD (186 aa)) are methyltransferase (MT) domain. A ketoreductase (KR)domain region spans residues 2118–2292 (TYWLVGLTGS…AGSVMNIGAI (175 aa)). The segment at 2399–2478 (TTDEIYEVIK…TIGEIIKFVL (80 aa)) is peptidyl carrier protein. The 77-residue stretch at 2405 to 2481 (EVIKECFIVK…EIIKFVLEKL (77 aa)) folds into the Carrier 1 domain. Position 2441 is an O-(pantetheine 4'-phosphoryl)serine (serine 2441). The interval 2488–2569 (SLGLSPPTGA…AASPSIHTEE (82 aa)) is disordered. Residues 2511–2525 (VVVERRNVPRLEKKI) show a composition bias toward basic and acidic residues. Low complexity predominate over residues 2528-2545 (SAGSRTSSSVTGTSKSVS). Polar residues predominate over residues 2551 to 2565 (DTASSQTSEAASPSI). Residues 2607–3036 (KEPLSFGQSR…DSKQPGGHVS (430 aa)) are condensation. An adenylation region spans residues 3069–3478 (DMAKQYPQKL…DGRLRIEGRI (410 aa)). The 81-residue stretch at 3593–3673 (AHLNEAQAQM…KMALLIKPQE (81 aa)) folds into the Carrier 2 domain. Positions 3598–3670 (AQAQMVQLWE…TLEKMALLIK (73 aa)) are thiolation. O-(pantetheine 4'-phosphoryl)serine is present on serine 3633. The tract at residues 3740–3959 (LTGATGFIGQ…DFVPVEQVVR (220 aa)) is reductase (RED) domain.

In the C-terminal section; belongs to the NRP synthetase family.

It functions in the pathway secondary metabolite biosynthesis. In terms of biological role, hybrid PKS-NRPS synthetase; part of the gene cluster that mediates the biosynthesis of oxaleimides, cytotoxic compounds containing an unusual disubstituted succinimide moiety. The first step of the pathway is provided by the HR-PKS poxF that serves in a new mode of collaborative biosynthesis with the PKS-NRPS poxE, by providing the olefin containing amino acid substrate via the synthesis of an ACP-bound dec-4-enoate. The cytochrome P450 monooxygenase poxM-catalyzed oxidation at the alpha-position creates the enzyme-bound 2-hydroxydec-4-enoyl-ACP thioester, which may be prone to spontaneous hydrolysis to yield 2-hydroxydec-4-enoic acid due to increased electrophilicity of the carbonyl. 2-hydroxydec-4-enoic acid can then be further oxidized by poxM to yield the alpha-ketoacid 2-oxodec-4-enoicacid, which is reductively aminated by the aminotransferase poxL to yield (S,E)-2-aminodec-4-enoic acid. The Hybrid PKS-NRPS synthetase poxE then performs condensation between the octaketide product of its PKS modules and the amino group of (S,E)-2-aminodec-4-enoic acid which is activated and incorporated by the adenylation domain. The resulting aminoacyl product can be cyclized by the Diels-Alderase PoxQ and reductively released by the reductive (R) domain of poxE to yield an aldehyde intermediate. The released aldehyde is then substrate for a Knoevenagel condensation by the hydrolyase poxO followed by an oxidation at the 5-position of the pyrrolidone ring. The presence of the olefin from the amino acid building block allows for migration of the substituted allyl group to occur. This allylic transposition reaction takes place in a conjugate addition, semipinacol-like fashion to yield a succinimide intermediate. Iterative two-electron oxidations of the C7 methyl of the succinimide intermediate to the carboxylic acid can be catalyzed by one of two remaining cytochrome P450 monooxygenasess poxC or poxD to yield oxaleimide A. Subsequent oxidation yields the maleimide scaffold oxaleimide I. Both oxaleimide A and oxaleimide I can undergo oxidative modifications in the decalin ring to yield the series of products oxaleimides B to H. In Penicillium oxalicum, this protein is Hybrid PKS-NRPS synthetase poxE.